A 288-amino-acid chain; its full sequence is Small ribosomal subunit protein uS3 (288 aa).

A KH type-2 domain is found at 39 to 107 (VREYLKAKLK…PVAVNIEEVR (69 aa)). The interval 209–288 (GRNDLPAAET…AAAAADGKGE (80 aa)) is disordered. A compositionally biased stretch (basic and acidic residues) spans 219 to 238 (PRPEEERRPRGPRRDGRPGD). Over residues 277-288 (APAAAAADGKGE) the composition is skewed to low complexity.

This sequence belongs to the universal ribosomal protein uS3 family. As to quaternary structure, part of the 30S ribosomal subunit. Forms a tight complex with proteins S10 and S14.

Functionally, binds the lower part of the 30S subunit head. Binds mRNA in the 70S ribosome, positioning it for translation. The sequence is that of Small ribosomal subunit protein uS3 from Acidovorax sp. (strain JS42).